Consider the following 221-residue polypeptide: Peroxiredoxin 2 (221 aa).

In terms of domain architecture, Thioredoxin spans 15–170; the sequence is PQIGAPAPDF…IIRIIDALQT (156 aa). Cys56 serves as the catalytic Cysteine sulfenic acid (-SOH) intermediate. Residue Arg133 participates in substrate binding. Residues Cys211 and Cys217 are joined by a disulfide bond.

This sequence belongs to the peroxiredoxin family. Prx6 subfamily. As to quaternary structure, homodecamer. Pentamer of dimers that assemble into a ring structure.

It is found in the cytoplasm. The enzyme catalyses a hydroperoxide + [thioredoxin]-dithiol = an alcohol + [thioredoxin]-disulfide + H2O. Its function is as follows. Thiol-specific peroxidase that catalyzes the reduction of hydrogen peroxide and organic hydroperoxides to water and alcohols, respectively. Plays a role in cell protection against oxidative stress by detoxifying peroxides. The sequence is that of Peroxiredoxin 2 from Caldanaerobacter subterraneus subsp. tengcongensis (strain DSM 15242 / JCM 11007 / NBRC 100824 / MB4) (Thermoanaerobacter tengcongensis).